Consider the following 686-residue polypeptide: Delta-like protein 4 (686 aa).

The N-terminal stretch at 1–26 (MTPASRSACRWALLLLAVLWPQQRAA) is a signal peptide. Topologically, residues 27–532 (GSGIFQLRLQ…GLPPSFPWVA (506 aa)) are extracellular. Intrachain disulfides connect Cys-51/Cys-55 and Cys-62/Cys-75. Residues Asn-79, Asn-109, and Asn-162 are each glycosylated (N-linked (GlcNAc...) asparagine). A DSL domain is found at 174–218 (VICSDNYYGESCSRLCKKRDDHFGHYECQPDGSLSCLPGWTGKYC). Residues Cys-176 and Cys-185 are joined by a disulfide bond. 2 interaction with Notch1 regions span residues 186–188 (SRL) and 192–196 (RDDHF). Cystine bridges form between Cys-189/Cys-201, Cys-209/Cys-218, Cys-223/Cys-234, Cys-227/Cys-240, Cys-242/Cys-251, Cys-254/Cys-265, Cys-260/Cys-271, Cys-273/Cys-282, Cys-289/Cys-301, Cys-295/Cys-311, Cys-313/Cys-322, Cys-329/Cys-340, Cys-334/Cys-349, Cys-351/Cys-360, Cys-367/Cys-378, Cys-372/Cys-389, Cys-391/Cys-400, Cys-407/Cys-418, Cys-412/Cys-427, Cys-429/Cys-438, Cys-445/Cys-456, Cys-450/Cys-465, Cys-467/Cys-476, Cys-485/Cys-496, Cys-490/Cys-507, and Cys-509/Cys-518. 8 EGF-like domains span residues 219 to 252 (DQPICLSGCHEQNGYCSKPDECICRPGWQGRLCN), 253 to 283 (ECIPHNGCRHGTCSIPWQCACDEGWGGLFCD), 285 to 323 (DLNYCTHHSPCKNGSTCSNSGPKGYTCTCLPGYTGEHCE), 325 to 361 (GLSKCASNPCRNGGSCKDQENSYHCLCPPGYYGQHCE), 364 to 401 (TLTCADSPCFNGGSCRERNQGSSYACECPPNFTGSNCE), 403 to 439 (KVDRCTSNPCANGGQCQNRGPSRTCRCRPGFTGTHCE), 441 to 477 (HISDCARSPCAHGGTCHDLENGPVCTCPAGFSGRRCE), and 481 to 519 (THDACASGPCFNGATCYTGLSPNNFVCNCPYGFVGSRCE). Residue Asn-297 is glycosylated (N-linked (GlcNAc...) asparagine). An N-linked (GlcNAc...) asparagine glycan is attached at Asn-394. Residues 533–553 (VSLGVGLVVLLVLLVMVVVAV) form a helical membrane-spanning segment. Residues 554-686 (RQLRLRRPDD…RNECVIATEV (133 aa)) lie on the Cytoplasmic side of the membrane.

As to quaternary structure, interacts with NOTCH4. Interacts (via N-terminal DSL and MNNL domains) with NOTCH1 (via EGF-like domains). In terms of tissue distribution, expressed in vascular endothelium. Expressed in retina at least during embryogenesis.

Its subcellular location is the cell membrane. Its function is as follows. Involved in the Notch signaling pathway as Notch ligand. Activates NOTCH1 and NOTCH4. Involved in angiogenesis; negatively regulates endothelial cell proliferation and migration and angiogenic sprouting. Essential for retinal progenitor proliferation. Required for suppressing rod fates in late retinal progenitors as well as for proper generation of other retinal cell types. During spinal cord neurogenesis, inhibits V2a interneuron fate. The protein is Delta-like protein 4 (Dll4) of Mus musculus (Mouse).